Reading from the N-terminus, the 268-residue chain is NAD kinase (268 aa).

D45 (proton acceptor) is an active-site residue. Residues 45 to 46 (DG), 122 to 123 (NE), R148, D150, 161 to 166 (TAYGKS), A185, and Q223 each bind NAD(+).

It belongs to the NAD kinase family. A divalent metal cation serves as cofactor.

It is found in the cytoplasm. It catalyses the reaction NAD(+) + ATP = ADP + NADP(+) + H(+). In terms of biological role, involved in the regulation of the intracellular balance of NAD and NADP, and is a key enzyme in the biosynthesis of NADP. Catalyzes specifically the phosphorylation on 2'-hydroxyl of the adenosine moiety of NAD to yield NADP. The sequence is that of NAD kinase from Latilactobacillus sakei subsp. sakei (strain 23K) (Lactobacillus sakei subsp. sakei).